The sequence spans 496 residues: Maintenance of mitochondrial morphology protein 1 (496 aa).

At 1 to 22 (MSSQLNDPTPIPAQSSLSFTQG) the chain is on the lumenal side. The chain crosses the membrane as a helical span at residues 23 to 43 (FLLGQLSVVLLIAAFIKFFIF). At 44–496 (GEAPPPPSRG…SLPGGGVTTT (453 aa)) the chain is on the cytoplasmic side. 4 disordered regions span residues 50–96 (PSRG…VPSS), 276–331 (PLDT…KSNV), 395–433 (GRTG…SREP), and 449–496 (DLAS…VTTT). A compositionally biased stretch (basic residues) spans 54–64 (LSHRSATHRRS). Positions 65–74 (NSIYSSTQHD) are enriched in polar residues. Over residues 75–84 (GNTRTLREKP) the composition is skewed to basic and acidic residues. The segment covering 85–96 (SNSNVLRPVPSS) has biased composition (polar residues). The SMP-LTD domain occupies 131 to 388 (QPESLDWFNV…EPRVQVVGLP (258 aa)). Residues 276-287 (PLDTPSHSPSPP) are compositionally biased toward pro residues. Polar residues predominate over residues 407 to 418 (TGSNAPRSSTAA). 2 stretches are compositionally biased toward basic and acidic residues: residues 424 to 433 (AHHEDSSREP) and 462 to 474 (GDLR…REES).

It belongs to the MMM1 family. Homodimer. Component of the ER-mitochondria encounter structure (ERMES) or MDM complex, composed of mmm1, mdm10, mdm12 and mdm34. A mmm1 homodimer associates with one molecule of mdm12 on each side in a pairwise head-to-tail manner, and the SMP-LTD domains of mmm1 and mdm12 generate a continuous hydrophobic tunnel for phospholipid trafficking.

The protein localises to the endoplasmic reticulum membrane. Component of the ERMES/MDM complex, which serves as a molecular tether to connect the endoplasmic reticulum (ER) and mitochondria. Components of this complex are involved in the control of mitochondrial shape and protein biogenesis, and function in nonvesicular lipid trafficking between the ER and mitochondria. The mdm12-mmm1 subcomplex functions in the major beta-barrel assembly pathway that is responsible for biogenesis of all outer membrane beta-barrel proteins, and acts in a late step after the SAM complex. The mdm10-mdm12-mmm1 subcomplex further acts in the TOM40-specific pathway after the action of the mdm12-mmm1 complex. Essential for establishing and maintaining the structure of mitochondria and maintenance of mtDNA nucleoids. The protein is Maintenance of mitochondrial morphology protein 1 of Neosartorya fischeri (strain ATCC 1020 / DSM 3700 / CBS 544.65 / FGSC A1164 / JCM 1740 / NRRL 181 / WB 181) (Aspergillus fischerianus).